We begin with the raw amino-acid sequence, 948 residues long: Receptor-like protein 45 (948 aa).

The first 26 residues, 1–26, serve as a signal peptide directing secretion; it reads MSSSKLMDFGLTWIIMMMILLQGCRS. The Extracellular portion of the chain corresponds to 27-897; it reads CIESERQGLL…EDDDESGLLD (871 aa). Asn99 and Asn113 each carry an N-linked (GlcNAc...) asparagine glycan. LRR repeat units follow at residues 106–129 and 135–162; these read FEEL…RKGG and LRNL…AVSL. The stretch at 163-183 is one LRR 3; degenerate repeat; sequence KTLILHDNLFKGGFPVQELIN. An N-linked (GlcNAc...) asparagine glycan is attached at Asn183. 25 LRR repeats span residues 184 to 208, 210 to 233, 234 to 257, 258 to 284, 286 to 306, 307 to 332, 334 to 357, 358 to 381, 382 to 404, 405 to 429, 430 to 453, 454 to 477, 479 to 502, 503 to 526, 527 to 549, 550 to 573, 575 to 595, 596 to 618, 619 to 640, 642 to 665, 666 to 689, 758 to 782, 783 to 805, 807 to 831, and 833 to 855; these read LTSL…ELTN, RNLR…GICR, LEQL…CFSR, FSKL…DFKS, EYLS…LITE, LTEL…VSGG, QSQL…LWYQ, QELR…LLEN, NTEL…PRTM, RRLQ…GLIL, ASLR…MARM, ENIE…LFTG, YSLS…SSDE, TSLI…LLNL, RMLS…WLGN, FFLE…LFNI, YLWL…LRSS, SDYG…DTLW, YGLR…LFRS, PSIS…LCGL, SNVR…VTNL, LNQM…LGDL, KRVR…SFSN, RSIE…TLLQ, and LVVF…QFNT. Asn328 is a glycosylation site (N-linked (GlcNAc...) asparagine). 2 N-linked (GlcNAc...) asparagine glycosylation sites follow: Asn381 and Asn392. 2 N-linked (GlcNAc...) asparagine glycosylation sites follow: Asn436 and Asn465. An N-linked (GlcNAc...) asparagine glycan is attached at Asn608. Residues Asn653, Asn679, and Asn688 are each glycosylated (N-linked (GlcNAc...) asparagine). Asn789 carries N-linked (GlcNAc...) asparagine glycosylation. Residues Asn837 and Asn842 are each glycosylated (N-linked (GlcNAc...) asparagine). The chain crosses the membrane as a helical span at residues 898 to 918; the sequence is IVVLWWSLGTTYVTVMMGFLV. At 919–948 the chain is on the cytoplasmic side; sequence FLCFDSPWRRAWFCLVDTFIDRVKDVLGVI.

The protein belongs to the RLP family.

It localises to the cell membrane. The sequence is that of Receptor-like protein 45 from Arabidopsis thaliana (Mouse-ear cress).